We begin with the raw amino-acid sequence, 494 residues long: ATP synthase subunit beta, plastid (494 aa).

169 to 176 serves as a coordination point for ATP; it reads GGAGVGKT.

Belongs to the ATPase alpha/beta chains family. In terms of assembly, F-type ATPases have 2 components, CF(1) - the catalytic core - and CF(0) - the membrane proton channel. CF(1) has five subunits: alpha(3), beta(3), gamma(1), delta(1), epsilon(1). CF(0) has four main subunits: a(1), b(1), b'(1) and c(9-12).

Its subcellular location is the plastid thylakoid membrane. It catalyses the reaction ATP + H2O + 4 H(+)(in) = ADP + phosphate + 5 H(+)(out). Functionally, produces ATP from ADP in the presence of a proton gradient across the membrane. The catalytic sites are hosted primarily by the beta subunits. This is ATP synthase subunit beta, plastid (atpB) from Cuscuta gronovii (Common dodder).